A 160-amino-acid polypeptide reads, in one-letter code: Large ribosomal subunit protein uL22c (160 aa).

This sequence belongs to the universal ribosomal protein uL22 family. As to quaternary structure, part of the 50S ribosomal subunit.

It is found in the plastid. The protein localises to the chloroplast. This protein binds specifically to 23S rRNA. Its function is as follows. The globular domain of the protein is located near the polypeptide exit tunnel on the outside of the subunit, while an extended beta-hairpin is found that lines the wall of the exit tunnel in the center of the 70S ribosome. This is Large ribosomal subunit protein uL22c (rpl22) from Arabidopsis thaliana (Mouse-ear cress).